A 326-amino-acid polypeptide reads, in one-letter code: GTP 3',8-cyclase (326 aa).

A Radical SAM core domain is found at 6–220; sequence SFGRRINYLR…DRISASYELE (215 aa). Arg-15 is a binding site for GTP. 2 residues coordinate [4Fe-4S] cluster: Cys-22 and Cys-26. Residue Tyr-28 participates in S-adenosyl-L-methionine binding. Residue Cys-29 coordinates [4Fe-4S] cluster. GTP is bound at residue Arg-65. Gly-69 lines the S-adenosyl-L-methionine pocket. Thr-96 lines the GTP pocket. Ser-120 contacts S-adenosyl-L-methionine. A GTP-binding site is contributed by Lys-157. Met-191 contributes to the S-adenosyl-L-methionine binding site. Positions 254 and 257 each coordinate [4Fe-4S] cluster. GTP is bound at residue 259 to 261; sequence RVR. Cys-271 contributes to the [4Fe-4S] cluster binding site.

Belongs to the radical SAM superfamily. MoaA family. As to quaternary structure, monomer and homodimer. [4Fe-4S] cluster serves as cofactor.

It carries out the reaction GTP + AH2 + S-adenosyl-L-methionine = (8S)-3',8-cyclo-7,8-dihydroguanosine 5'-triphosphate + 5'-deoxyadenosine + L-methionine + A + H(+). It participates in cofactor biosynthesis; molybdopterin biosynthesis. Functionally, catalyzes the cyclization of GTP to (8S)-3',8-cyclo-7,8-dihydroguanosine 5'-triphosphate. The sequence is that of GTP 3',8-cyclase from Geobacter sulfurreducens (strain ATCC 51573 / DSM 12127 / PCA).